A 570-amino-acid polypeptide reads, in one-letter code: Periplasmic trehalase (570 aa).

A signal peptide spans 1–34; the sequence is MIPPEIRRSVLLQKAIKLALAGTLLTFASFSATA. Substrate contacts are provided by residues Arg159, 166 to 167, Asn203, 212 to 214, 284 to 286, and Gly317; these read WD, RSQ, and RPE. Residues Asp319 and Glu503 each act as proton donor/acceptor in the active site. Glu518 provides a ligand contact to substrate. Residues 544-570 form a disordered region; it reads KPCDSVPSTRPASLSATPTKTPSAATQ. The span at 554–570 shows a compositional bias: low complexity; that stretch reads PASLSATPTKTPSAATQ.

It belongs to the glycosyl hydrolase 37 family. Monomer.

It localises to the periplasm. It carries out the reaction alpha,alpha-trehalose + H2O = alpha-D-glucose + beta-D-glucose. Functionally, provides the cells with the ability to utilize trehalose at high osmolarity by splitting it into glucose molecules that can subsequently be taken up by the phosphotransferase-mediated uptake system. This chain is Periplasmic trehalase, found in Salmonella typhimurium (strain LT2 / SGSC1412 / ATCC 700720).